Reading from the N-terminus, the 146-residue chain is Probable calcium-binding protein CML32 (146 aa).

EF-hand domains are found at residues 1-33 (MSVA…FSPS), 34-69 (ITSE…GGEG), 73-108 (DEDI…LGEK), and 109-144 (QTIA…NNKK). Ca(2+) is bound by residues Asp11, Asn13, Asp15, Lys17, Glu22, Asp47, Asp49, Asp51, Gln53, Glu58, Asp86, Asp88, Asp90, Lys92, Glu97, Asp122, Asp124, Asp126, and Glu133.

In terms of biological role, potential calcium sensor. This chain is Probable calcium-binding protein CML32 (CML32), found in Arabidopsis thaliana (Mouse-ear cress).